The chain runs to 450 residues: Tubulin alpha-3 chain (450 aa).

Glutamine 11 is a binding site for GTP. N6-acetyllysine is present on lysine 40. GTP is bound by residues glutamate 71, serine 140, glycine 144, threonine 145, threonine 179, asparagine 206, and asparagine 228. Mg(2+) is bound at residue glutamate 71. Glutamate 254 is a catalytic residue.

Belongs to the tubulin family. As to quaternary structure, dimer of alpha and beta chains. A typical microtubule is a hollow water-filled tube with an outer diameter of 25 nm and an inner diameter of 15 nM. Alpha-beta heterodimers associate head-to-tail to form protofilaments running lengthwise along the microtubule wall with the beta-tubulin subunit facing the microtubule plus end conferring a structural polarity. Microtubules usually have 13 protofilaments but different protofilament numbers can be found in some organisms and specialized cells. The cofactor is Mg(2+). Undergoes a tyrosination/detyrosination cycle, the cyclic removal and re-addition of a C-terminal tyrosine residue by the enzymes tubulin tyrosine carboxypeptidase (TTCP) and tubulin tyrosine ligase (TTL), respectively. In terms of processing, acetylation of alpha chains at Lys-40 stabilizes microtubules and affects affinity and processivity of microtubule motors. This modification has a role in multiple cellular functions, ranging from cell motility, cell cycle progression or cell differentiation to intracellular trafficking and signaling. During the early stages of oogenesis lky/Alpha-tubulin N-acetyltransferase 2 is the main acetyltransferase responsible for Lys-40 acetylation in germline cells while Atat/alpha-tubulin N-acetyltransferase 1 is the main acetyltransferase responsible for Lys-40 acetylation in somatic cells.

It localises to the cytoplasm. It is found in the cytoskeleton. It catalyses the reaction GTP + H2O = GDP + phosphate + H(+). Tubulin is the major constituent of microtubules, a cylinder consisting of laterally associated linear protofilaments composed of alpha- and beta-tubulin heterodimers. Microtubules grow by the addition of GTP-tubulin dimers to the microtubule end, where a stabilizing cap forms. Below the cap, tubulin dimers are in GDP-bound state, owing to GTPase activity of alpha-tubulin. This is Tubulin alpha-3 chain (alphaTub84D) from Drosophila melanogaster (Fruit fly).